The primary structure comprises 98 residues: NADH-ubiquinone oxidoreductase chain 4L (98 aa).

3 helical membrane-spanning segments follow: residues 1-21 (MTTMFFNLLLAFMVALMGVYI), 29-49 (TLLCLEGMMLSIFIMVSLTLL), and 59-79 (FPLILLVFSACEAGVGLALLV).

This sequence belongs to the complex I subunit 4L family. Core subunit of respiratory chain NADH dehydrogenase (Complex I) which is composed of 45 different subunits.

It localises to the mitochondrion inner membrane. It carries out the reaction a ubiquinone + NADH + 5 H(+)(in) = a ubiquinol + NAD(+) + 4 H(+)(out). In terms of biological role, core subunit of the mitochondrial membrane respiratory chain NADH dehydrogenase (Complex I) which catalyzes electron transfer from NADH through the respiratory chain, using ubiquinone as an electron acceptor. Part of the enzyme membrane arm which is embedded in the lipid bilayer and involved in proton translocation. This chain is NADH-ubiquinone oxidoreductase chain 4L (MT-ND4L), found in Zaglossus bruijni (Western long-beaked echidna).